Here is a 132-residue protein sequence, read N- to C-terminus: Two-component response regulator ORR42 (132 aa).

The Response regulatory domain maps to 11–125 (RALLVEDIKV…LEHILQETRS (115 aa)). A 4-aspartylphosphate modification is found at D61.

The protein belongs to the ARR family. Type-C subfamily. In terms of processing, two-component system major event consists of a His-to-Asp phosphorelay between a sensor histidine kinase (HK) and a response regulator (RR). In plants, the His-to-Asp phosphorelay involves an additional intermediate named Histidine-containing phosphotransfer protein (HPt). This multistep phosphorelay consists of a His-Asp-His-Asp sequential transfer of a phosphate group between first a His and an Asp of the HK protein, followed by the transfer to a conserved His of the HPt protein and finally the transfer to an Asp in the receiver domain of the RR protein.

In terms of biological role, functions as a response regulator involved in His-to-Asp phosphorelay signal transduction system. Phosphorylation of the Asp residue in the receiver domain activates the ability of the protein to promote the transcription of target genes. May directly activate some type-A response regulators in response to cytokinins. This Oryza sativa subsp. japonica (Rice) protein is Two-component response regulator ORR42.